Reading from the N-terminus, the 158-residue chain is Regulator of sigma D (158 aa).

The protein belongs to the Rsd/AlgQ family. In terms of assembly, interacts with RpoD.

It is found in the cytoplasm. Binds RpoD and negatively regulates RpoD-mediated transcription activation by preventing the interaction between the primary sigma factor RpoD with the catalytic core of the RNA polymerase and with promoter DNA. May be involved in replacement of the RNA polymerase sigma subunit from RpoD to RpoS during the transition from exponential growth to the stationary phase. The protein is Regulator of sigma D of Escherichia coli O127:H6 (strain E2348/69 / EPEC).